A 327-amino-acid polypeptide reads, in one-letter code: Methionyl-tRNA formyltransferase (327 aa).

(6S)-5,6,7,8-tetrahydrofolate is bound at residue 121 to 124 (SLLP).

The protein belongs to the Fmt family.

It catalyses the reaction L-methionyl-tRNA(fMet) + (6R)-10-formyltetrahydrofolate = N-formyl-L-methionyl-tRNA(fMet) + (6S)-5,6,7,8-tetrahydrofolate + H(+). In terms of biological role, attaches a formyl group to the free amino group of methionyl-tRNA(fMet). The formyl group appears to play a dual role in the initiator identity of N-formylmethionyl-tRNA by promoting its recognition by IF2 and preventing the misappropriation of this tRNA by the elongation apparatus. This Burkholderia multivorans (strain ATCC 17616 / 249) protein is Methionyl-tRNA formyltransferase.